Reading from the N-terminus, the 433-residue chain is Gamma-glutamyl phosphate reductase (433 aa).

Belongs to the gamma-glutamyl phosphate reductase family.

The protein resides in the cytoplasm. It catalyses the reaction L-glutamate 5-semialdehyde + phosphate + NADP(+) = L-glutamyl 5-phosphate + NADPH + H(+). It functions in the pathway amino-acid biosynthesis; L-proline biosynthesis; L-glutamate 5-semialdehyde from L-glutamate: step 2/2. Functionally, catalyzes the NADPH-dependent reduction of L-glutamate 5-phosphate into L-glutamate 5-semialdehyde and phosphate. The product spontaneously undergoes cyclization to form 1-pyrroline-5-carboxylate. This chain is Gamma-glutamyl phosphate reductase, found in Cyanothece sp. (strain PCC 7425 / ATCC 29141).